The sequence spans 208 residues: Methyl-CpG-binding domain protein 3-like 2 (208 aa).

The tract at residues 1–89 (MGEPAFTSFP…HLEKPQQLCA (89 aa)) is interacts with MBD3.

The protein belongs to the MBD3L family. As to quaternary structure, interacts (via N-terminus) with MBD3; the interaction is direct. Interacts with MTA1. Interacts with HDAC1. Interacts with HDAC2. Interacts with RBBP4. Interacts with RBBP7. Detected at low levels in several somatic tissues. Highly expressed in the ovarian teratocarcinoma cell line PA-1.

It is found in the nucleus. Its function is as follows. May displace the NuRD complex from chromatin. The polypeptide is Methyl-CpG-binding domain protein 3-like 2 (MBD3L2) (Homo sapiens (Human)).